The chain runs to 415 residues: Serine hydroxymethyltransferase 1 (415 aa).

(6S)-5,6,7,8-tetrahydrofolate-binding positions include leucine 122 and 126 to 128 (GHL). Lysine 230 bears the N6-(pyridoxal phosphate)lysine mark.

It belongs to the SHMT family. In terms of assembly, homodimer. Pyridoxal 5'-phosphate serves as cofactor.

It is found in the cytoplasm. It carries out the reaction (6R)-5,10-methylene-5,6,7,8-tetrahydrofolate + glycine + H2O = (6S)-5,6,7,8-tetrahydrofolate + L-serine. It participates in one-carbon metabolism; tetrahydrofolate interconversion. The protein operates within amino-acid biosynthesis; glycine biosynthesis; glycine from L-serine: step 1/1. Catalyzes the reversible interconversion of serine and glycine with tetrahydrofolate (THF) serving as the one-carbon carrier. This reaction serves as the major source of one-carbon groups required for the biosynthesis of purines, thymidylate, methionine, and other important biomolecules. Also exhibits THF-independent aldolase activity toward beta-hydroxyamino acids, producing glycine and aldehydes, via a retro-aldol mechanism. The chain is Serine hydroxymethyltransferase 1 from Ralstonia nicotianae (strain ATCC BAA-1114 / GMI1000) (Ralstonia solanacearum).